A 92-amino-acid polypeptide reads, in one-letter code: UPF0298 protein BH2594 (92 aa).

This sequence belongs to the UPF0298 family.

It localises to the cytoplasm. The protein is UPF0298 protein BH2594 of Halalkalibacterium halodurans (strain ATCC BAA-125 / DSM 18197 / FERM 7344 / JCM 9153 / C-125) (Bacillus halodurans).